The primary structure comprises 177 residues: ATP synthase subunit delta (177 aa).

This sequence belongs to the ATPase delta chain family. F-type ATPases have 2 components, F(1) - the catalytic core - and F(0) - the membrane proton channel. F(1) has five subunits: alpha(3), beta(3), gamma(1), delta(1), epsilon(1). F(0) has three main subunits: a(1), b(2) and c(10-14). The alpha and beta chains form an alternating ring which encloses part of the gamma chain. F(1) is attached to F(0) by a central stalk formed by the gamma and epsilon chains, while a peripheral stalk is formed by the delta and b chains.

The protein resides in the cell inner membrane. F(1)F(0) ATP synthase produces ATP from ADP in the presence of a proton or sodium gradient. F-type ATPases consist of two structural domains, F(1) containing the extramembraneous catalytic core and F(0) containing the membrane proton channel, linked together by a central stalk and a peripheral stalk. During catalysis, ATP synthesis in the catalytic domain of F(1) is coupled via a rotary mechanism of the central stalk subunits to proton translocation. Functionally, this protein is part of the stalk that links CF(0) to CF(1). It either transmits conformational changes from CF(0) to CF(1) or is implicated in proton conduction. In Klebsiella pneumoniae subsp. pneumoniae (strain ATCC 700721 / MGH 78578), this protein is ATP synthase subunit delta.